A 351-amino-acid chain; its full sequence is V-type proton ATPase subunit d2 (351 aa).

Belongs to the V-ATPase V0D/AC39 subunit family. V-ATPase is a heteromultimeric enzyme composed of a peripheral catalytic V1 complex (components A to H) attached to an integral membrane V0 proton pore complex (components: a, c, c'', d and e).

The protein resides in the vacuole membrane. In terms of biological role, subunit of the integral membrane V0 complex of vacuolar ATPase. Vacuolar ATPase is responsible for acidifying a variety of intracellular compartments in eukaryotic cells, thus providing most of the energy required for transport processes in the vacuolar system. This is V-type proton ATPase subunit d2 (VHA-d2) from Arabidopsis thaliana (Mouse-ear cress).